The chain runs to 119 residues: Large ribosomal subunit protein bL19 (119 aa).

The protein belongs to the bacterial ribosomal protein bL19 family.

This protein is located at the 30S-50S ribosomal subunit interface and may play a role in the structure and function of the aminoacyl-tRNA binding site. This Limosilactobacillus fermentum (strain NBRC 3956 / LMG 18251) (Lactobacillus fermentum) protein is Large ribosomal subunit protein bL19.